The primary structure comprises 84 residues: Large ribosomal subunit protein bL27 (84 aa).

The disordered stretch occupies residues 1 to 21; the sequence is MAHKKAGGSTRNGRDSESKRL.

The protein belongs to the bacterial ribosomal protein bL27 family.

This chain is Large ribosomal subunit protein bL27, found in Baumannia cicadellinicola subsp. Homalodisca coagulata.